The following is a 285-amino-acid chain: Pantothenate synthetase (285 aa).

33–40 serves as a coordination point for ATP; it reads MGALHEGH. His-40 acts as the Proton donor in catalysis. A (R)-pantoate-binding site is contributed by Gln-64. Residue Gln-64 participates in beta-alanine binding. 150–153 provides a ligand contact to ATP; it reads GEKD. Gln-156 contributes to the (R)-pantoate binding site. ATP-binding positions include Ala-179 and 187–190; that span reads LSSR.

It belongs to the pantothenate synthetase family. In terms of assembly, homodimer.

The protein resides in the cytoplasm. It carries out the reaction (R)-pantoate + beta-alanine + ATP = (R)-pantothenate + AMP + diphosphate + H(+). It functions in the pathway cofactor biosynthesis; (R)-pantothenate biosynthesis; (R)-pantothenate from (R)-pantoate and beta-alanine: step 1/1. Its function is as follows. Catalyzes the condensation of pantoate with beta-alanine in an ATP-dependent reaction via a pantoyl-adenylate intermediate. The sequence is that of Pantothenate synthetase from Caulobacter vibrioides (strain ATCC 19089 / CIP 103742 / CB 15) (Caulobacter crescentus).